Here is a 689-residue protein sequence, read N- to C-terminus: DNA ligase (689 aa).

Residues 51–55 (DSEYD), 100–101 (SL), and Glu-129 each bind NAD(+). The active-site N6-AMP-lysine intermediate is the Lys-131. Positions 152, 189, 308, and 332 each coordinate NAD(+). Zn(2+) contacts are provided by Cys-426, Cys-429, Cys-444, and Cys-450. A BRCT domain is found at 609–689 (ADEQPLKGQT…ELLALLAANR (81 aa)).

Belongs to the NAD-dependent DNA ligase family. LigA subfamily. The cofactor is Mg(2+). Requires Mn(2+) as cofactor.

The enzyme catalyses NAD(+) + (deoxyribonucleotide)n-3'-hydroxyl + 5'-phospho-(deoxyribonucleotide)m = (deoxyribonucleotide)n+m + AMP + beta-nicotinamide D-nucleotide.. Functionally, DNA ligase that catalyzes the formation of phosphodiester linkages between 5'-phosphoryl and 3'-hydroxyl groups in double-stranded DNA using NAD as a coenzyme and as the energy source for the reaction. It is essential for DNA replication and repair of damaged DNA. The polypeptide is DNA ligase (Shewanella oneidensis (strain ATCC 700550 / JCM 31522 / CIP 106686 / LMG 19005 / NCIMB 14063 / MR-1)).